We begin with the raw amino-acid sequence, 288 residues long: MSDLRQNFERDGFVVIENVFNDQEIEEIKGAIGKIVEDMNLAEHPKSVFSTYDEDKHAADSYFLNSSDKIRFFFEEGAVDKDGELTVPKDKALNKIGHGLHLLDPTFKKMTFNSKIQKIFQGIGYQEPEVVQSMYIFKQPKIGGAVTDHVDSTFLRVNPIDHLTGVWIAIDEASVENGCLSFIPGSHKDTSTSDYRFVRTHDTTGGPLLKFIGTRPTYDQSKFQHVPISKGSLILIHGLVVHKSEANTSDKSRHAYTIHVMEKQNTEWSKDNWLQETEQYKFPNLYKQ.

Residues K95, M134, 149-151 (HVD), and W167 contribute to the 2-oxoglutarate site. H149 and D151 together coordinate Fe cation. H242 serves as a coordination point for Fe cation. The 2-oxoglutarate site is built by S244 and R253.

Belongs to the PhyH family. PHYHD1 subfamily. Fe cation serves as cofactor.

Its function is as follows. Has alpha-ketoglutarate-dependent dioxygenase activity. Does not show detectable activity towards fatty acid CoA thioesters. Is not expected to be active with phytanoyl CoA. The protein is Phytanoyl-CoA dioxygenase domain-containing protein 1 homolog of Caenorhabditis briggsae.